The following is an 89-amino-acid chain: Small ribosomal subunit protein uS14 (89 aa).

The protein belongs to the universal ribosomal protein uS14 family. As to quaternary structure, part of the 30S ribosomal subunit. Contacts proteins S3 and S10.

Its function is as follows. Binds 16S rRNA, required for the assembly of 30S particles and may also be responsible for determining the conformation of the 16S rRNA at the A site. This Chlorobium chlorochromatii (strain CaD3) protein is Small ribosomal subunit protein uS14.